A 119-amino-acid chain; its full sequence is MRQNTILENVTSAQLRTDIPAFRAGDTVKVYAKIVEGSRERVQLFEGVVIKRKGAGIQATYTVRKISSGVGVERTFPLHSPRVEKIEVTRFGQVRRAKLYYLRALQGKAARIKERRRDV.

Belongs to the bacterial ribosomal protein bL19 family.

Its function is as follows. This protein is located at the 30S-50S ribosomal subunit interface and may play a role in the structure and function of the aminoacyl-tRNA binding site. The chain is Large ribosomal subunit protein bL19 from Leuconostoc mesenteroides subsp. mesenteroides (strain ATCC 8293 / DSM 20343 / BCRC 11652 / CCM 1803 / JCM 6124 / NCDO 523 / NBRC 100496 / NCIMB 8023 / NCTC 12954 / NRRL B-1118 / 37Y).